A 187-amino-acid chain; its full sequence is Large ribosomal subunit protein bL25 (187 aa).

Belongs to the bacterial ribosomal protein bL25 family. CTC subfamily. In terms of assembly, part of the 50S ribosomal subunit; part of the 5S rRNA/L5/L18/L25 subcomplex. Contacts the 5S rRNA. Binds to the 5S rRNA independently of L5 and L18.

In terms of biological role, this is one of the proteins that binds to the 5S RNA in the ribosome where it forms part of the central protuberance. The polypeptide is Large ribosomal subunit protein bL25 (Tropheryma whipplei (strain TW08/27) (Whipple's bacillus)).